Reading from the N-terminus, the 147-residue chain is MSKKQFYLVREDMLTDAMQRTLEAKALLSAGKVRKINEAVHRVGLSRSAFYKYKDGIFPFHAIAKERIMTFSINLADRSGTLSQLLNIVADTGANILTINQTIPLQGRANITLSVDTAPIEIDINELFERMEALESVERVELVGSGS.

The region spanning 70-145 is the ACT domain; sequence TFSINLADRS…SVERVELVGS (76 aa).

It belongs to the UPF0735 family.

This Shouchella clausii (strain KSM-K16) (Alkalihalobacillus clausii) protein is UPF0735 ACT domain-containing protein ABC1543.